A 170-amino-acid chain; its full sequence is Probable calcium-binding protein CML29 (170 aa).

3 consecutive EF-hand domains span residues 27–62 (SYISSLVEAFQAFDSDNDGLVTAPELRGLLASLGLD), 63–98 (KPEHEVRDMLARADADRDGKLSVEELLDVMNAGQLG), and 138–170 (ASVEDCMEIIACMDGDGDGAISVEEFRLMAQLL). Residues Asp-40, Asp-42, Asp-44, Glu-51, Asp-76, Asp-78, Asp-80, Lys-82, Glu-87, Asp-151, Asp-153, Asp-155, and Glu-162 each contribute to the Ca(2+) site.

Potential calcium sensor. The polypeptide is Probable calcium-binding protein CML29 (CML29) (Oryza sativa subsp. japonica (Rice)).